The following is a 241-amino-acid chain: MNTTILIHDDDIQVNDLKENKTFLLLSEHNERIIDKLCSCLLPIIFYCDYITSPDDEGTLETRILSSSYMIRDKYVNVEEFITAGLPLSWCVNLPEKAHSTASDSLIIRDVLYYKKDWIRILLIQCPSAIYTDEELLIDPFKLPRHPPELFKNVTLRSYVNGLLFYPTSSPLYALLSHVVTTFIIKHITCVTKHDEKLITTCYDKGRFNAFVYAWYNSQISDDVVENEKVKNLFALVKARI.

The protein belongs to the chordopoxvirinae D3 family.

The protein resides in the virion. Its function is as follows. Late protein which is part of a large complex required for early virion morphogenesis. This complex participates in the formation of virosomes and the incorporation of virosomal contents into nascent immature virions. The sequence is that of Core protein D3 homolog from Oryctolagus cuniculus (Rabbit).